Here is a 156-residue protein sequence, read N- to C-terminus: Small ribosomal subunit protein uS7 (156 aa).

Belongs to the universal ribosomal protein uS7 family. Part of the 30S ribosomal subunit. Contacts proteins S9 and S11.

One of the primary rRNA binding proteins, it binds directly to 16S rRNA where it nucleates assembly of the head domain of the 30S subunit. Is located at the subunit interface close to the decoding center, probably blocks exit of the E-site tRNA. The polypeptide is Small ribosomal subunit protein uS7 (Synechocystis sp. (strain ATCC 27184 / PCC 6803 / Kazusa)).